Consider the following 328-residue polypeptide: Lipoyl synthase (328 aa).

Residues C57, C62, C68, C83, C87, C90, and S298 each coordinate [4Fe-4S] cluster. One can recognise a Radical SAM core domain in the interval 69–287; sequence WSRGTATFML…REEGLSLGFL (219 aa).

Belongs to the radical SAM superfamily. Lipoyl synthase family. The cofactor is [4Fe-4S] cluster.

The protein localises to the cytoplasm. It carries out the reaction [[Fe-S] cluster scaffold protein carrying a second [4Fe-4S](2+) cluster] + N(6)-octanoyl-L-lysyl-[protein] + 2 oxidized [2Fe-2S]-[ferredoxin] + 2 S-adenosyl-L-methionine + 4 H(+) = [[Fe-S] cluster scaffold protein] + N(6)-[(R)-dihydrolipoyl]-L-lysyl-[protein] + 4 Fe(3+) + 2 hydrogen sulfide + 2 5'-deoxyadenosine + 2 L-methionine + 2 reduced [2Fe-2S]-[ferredoxin]. Its pathway is protein modification; protein lipoylation via endogenous pathway; protein N(6)-(lipoyl)lysine from octanoyl-[acyl-carrier-protein]: step 2/2. Its function is as follows. Catalyzes the radical-mediated insertion of two sulfur atoms into the C-6 and C-8 positions of the octanoyl moiety bound to the lipoyl domains of lipoate-dependent enzymes, thereby converting the octanoylated domains into lipoylated derivatives. The chain is Lipoyl synthase from Deinococcus geothermalis (strain DSM 11300 / CIP 105573 / AG-3a).